The sequence spans 612 residues: UvrABC system protein C (612 aa).

The region spanning 20–98 is the GIY-YIG domain; sequence THSGVYRMLD…IKQHRPKYNI (79 aa). Residues 208–243 enclose the UVR domain; that stretch reads STVLEEISAKMYQASEDMEYEKAQVYRDQLVVLRKL.

It belongs to the UvrC family. As to quaternary structure, interacts with UvrB in an incision complex.

The protein localises to the cytoplasm. Its function is as follows. The UvrABC repair system catalyzes the recognition and processing of DNA lesions. UvrC both incises the 5' and 3' sides of the lesion. The N-terminal half is responsible for the 3' incision and the C-terminal half is responsible for the 5' incision. The polypeptide is UvrABC system protein C (Francisella tularensis subsp. novicida (strain U112)).